We begin with the raw amino-acid sequence, 494 residues long: Truncated non-functional calcium-binding mitochondrial carrier SAL1-1 (494 aa).

The EF-hand 1 domain maps to 11–46 (QRDIRYACLFKELDVKGNGQVTLDNLISAFEKNDHP). Ca(2+) contacts are provided by Lys-65, Asp-70, Asp-93, Asp-95, Asp-97, Lys-99, and Glu-104. 3 EF-hand domains span residues 80–115 (NAESQIWNGFQRIDLDHDGKIGINEINRYLSDLDNQ), 120–155 (NELNHELSNEKVNKFSRFFEWAFPKRKANIALRGQA), and 156–191 (SHKKNTDNDRSKKTTDSDLYVTYDQWRDFLLLVPRK). Ca(2+) contacts are provided by Thr-161 and Ser-166. Solcar repeat units lie at residues 225–332 (IRGF…TKKI) and 345–434 (LSKF…LKKM). 5 helical membrane-spanning segments follow: residues 231 to 248 (FIAGGISGVISRTCTAPF), 307 to 326 (GNGLNVIKVFPESSIKFGSF), 355 to 368 (GLAGMAAQFSVYPI), 409 to 428 (RCHSRYSGHISLCCIRFGDF), and 458 to 475 (TSNGCIQWNCRSFCCLSN). Residues 452-494 (SKQPGCTSNGCIQWNCRSFCCLSNQSFKNKTTSPRNICTSLCV) form a Solcar 3; truncated repeat.

Belongs to the mitochondrial carrier (TC 2.A.29) family.

It is found in the mitochondrion inner membrane. Calcium-dependent mitochondrial solute carrier. This Saccharomyces cerevisiae (strain ATCC 204508 / S288c) (Baker's yeast) protein is Truncated non-functional calcium-binding mitochondrial carrier SAL1-1 (SAL1).